A 143-amino-acid chain; its full sequence is uncharacterized protein (143 aa).

The next 2 membrane-spanning stretches (helical) occupy residues 16–36 (LIFAQIFIGCLMYFMLIIFVW) and 48–68 (ICYIIIFAIIDFVVCFKFIYV). The N-linked (GlcNAc...) asparagine; by host glycan is linked to N71.

The protein resides in the membrane. This is an uncharacterized protein from Acanthamoeba polyphaga (Amoeba).